We begin with the raw amino-acid sequence, 91 residues long: Putative regulatory protein Cyan7425_4125 (91 aa).

It belongs to the RemA family.

The protein is Putative regulatory protein Cyan7425_4125 of Cyanothece sp. (strain PCC 7425 / ATCC 29141).